Here is a 153-residue protein sequence, read N- to C-terminus: Ribosomal RNA large subunit methyltransferase H (153 aa).

S-adenosyl-L-methionine-binding positions include leucine 71, glycine 102, and 121-126 (LSRMTL).

This sequence belongs to the RNA methyltransferase RlmH family. In terms of assembly, homodimer.

The protein localises to the cytoplasm. It catalyses the reaction pseudouridine(1915) in 23S rRNA + S-adenosyl-L-methionine = N(3)-methylpseudouridine(1915) in 23S rRNA + S-adenosyl-L-homocysteine + H(+). In terms of biological role, specifically methylates the pseudouridine at position 1915 (m3Psi1915) in 23S rRNA. The chain is Ribosomal RNA large subunit methyltransferase H from Anaeromyxobacter sp. (strain Fw109-5).